Consider the following 206-residue polypeptide: N-(5'-phosphoribosyl)anthranilate isomerase (206 aa).

It belongs to the TrpF family.

The catalysed reaction is N-(5-phospho-beta-D-ribosyl)anthranilate = 1-(2-carboxyphenylamino)-1-deoxy-D-ribulose 5-phosphate. The protein operates within amino-acid biosynthesis; L-tryptophan biosynthesis; L-tryptophan from chorismate: step 3/5. The chain is N-(5'-phosphoribosyl)anthranilate isomerase from Pseudomonas putida (strain ATCC 700007 / DSM 6899 / JCM 31910 / BCRC 17059 / LMG 24140 / F1).